The primary structure comprises 180 residues: UPF0227 protein VV2369 (180 aa).

The protein belongs to the UPF0227 family.

In Vibrio vulnificus (strain YJ016), this protein is UPF0227 protein VV2369.